The chain runs to 269 residues: 5'-nucleotidase SurE (269 aa).

Positions 11, 12, 43, and 101 each coordinate a divalent metal cation.

It belongs to the SurE nucleotidase family. A divalent metal cation is required as a cofactor.

It is found in the cytoplasm. The catalysed reaction is a ribonucleoside 5'-phosphate + H2O = a ribonucleoside + phosphate. Nucleotidase that shows phosphatase activity on nucleoside 5'-monophosphates. This Prochlorococcus marinus (strain MIT 9211) protein is 5'-nucleotidase SurE.